The following is a 129-amino-acid chain: Procyclic form-specific polypeptide A-beta (129 aa).

A signal peptide spans 1–27 (MAPRSLYLLAVLLFSANLFAGVGFAAA). Residues 27 to 111 (AAEGPEDKGL…PEPEPGAATL (85 aa)) are disordered. Positions 53 to 104 (DDTNGTDPDPEPEPEPEPEPEPEPEPEPEPEPEPEPEPEPEPEPEPEPEPEP) are enriched in acidic residues. Residue N56 is glycosylated (N-linked (GlcNAc...) asparagine). Repeat copies occupy residues 59–60 (DP), 61–62 (DP), 63–64 (EP), 65–66 (EP), 67–68 (EP), 69–70 (EP), 71–72 (EP), 73–74 (EP), 75–76 (EP), 77–78 (EP), 79–80 (EP), 81–82 (EP), 83–84 (EP), 85–86 (EP), 87–88 (EP), 89–90 (EP), 91–92 (EP), 93–94 (EP), 95–96 (EP), 97–98 (EP), 99–100 (EP), 101–102 (EP), 103–104 (EP), and 105–106 (EP). The interval 59-106 (DPDPEPEPEPEPEPEPEPEPEPEPEPEPEPEPEPEPEPEPEPEPEPEP) is 24 X 2 AA tandem repeats of [DE]-P. G107 carries the GPI-anchor amidated glycine lipid modification. Positions 108–129 (AATLKSVALPFAIAAVGLVAAF) are excised as a propeptide.

It is found in the cell membrane. Functionally, major surface antigen of procyclic forms. The protein is Procyclic form-specific polypeptide A-beta (PARPA-BETA) of Trypanosoma brucei brucei.